The chain runs to 423 residues: Glucose-1-phosphate adenylyltransferase (423 aa).

Residues Tyr-98, Gly-163, 178-179, and Ser-189 each bind alpha-D-glucose 1-phosphate; that span reads EK.

This sequence belongs to the bacterial/plant glucose-1-phosphate adenylyltransferase family. As to quaternary structure, homotetramer.

The catalysed reaction is alpha-D-glucose 1-phosphate + ATP + H(+) = ADP-alpha-D-glucose + diphosphate. The protein operates within glycan biosynthesis; glycogen biosynthesis. Its function is as follows. Involved in the biosynthesis of ADP-glucose, a building block required for the elongation reactions to produce glycogen. Catalyzes the reaction between ATP and alpha-D-glucose 1-phosphate (G1P) to produce pyrophosphate and ADP-Glc. In Thermotoga sp. (strain RQ2), this protein is Glucose-1-phosphate adenylyltransferase.